Reading from the N-terminus, the 144-residue chain is Methylglyoxal synthase (144 aa).

Residues 1–144 enclose the MGS-like domain; it reads MNIALIAHDE…EEEQRKFLTD (144 aa). Substrate-binding positions include histidine 8, lysine 12, 34-37, and 54-55; these read TGTT and SG. Residue aspartate 60 is the Proton donor/acceptor of the active site. Histidine 87 serves as a coordination point for substrate.

It belongs to the methylglyoxal synthase family.

It catalyses the reaction dihydroxyacetone phosphate = methylglyoxal + phosphate. Functionally, catalyzes the formation of methylglyoxal from dihydroxyacetone phosphate. This Exiguobacterium sibiricum (strain DSM 17290 / CCUG 55495 / CIP 109462 / JCM 13490 / 255-15) protein is Methylglyoxal synthase.